The primary structure comprises 639 residues: uncharacterized protein (639 aa).

This is an uncharacterized protein from Mus musculus (Mouse).